We begin with the raw amino-acid sequence, 207 residues long: MARCKS-related protein 1-B (207 aa).

Low complexity-rich tracts occupy residues methionine 1 to lysine 25 and alanine 63 to glycine 77. The tract at residues methionine 1–glutamate 207 is disordered. Residue glycine 2 is the site of N-myristoyl glycine attachment. Residues glutamate 78 to threonine 90 show a composition bias toward basic and acidic residues. Residues lysine 93–lysine 116 are effector domain involved in lipid-binding. The span at leucine 100–isoleucine 109 shows a compositional bias: low complexity. 2 stretches are compositionally biased toward basic and acidic residues: residues threonine 131–glutamate 154 and proline 163–alanine 182. The segment covering glutamate 195–glutamate 207 has biased composition (polar residues).

It belongs to the MARCKS family. As to expression, strongly expressed in brain and eye. Also detected at lower levels in muscle.

It is found in the cytoplasm. The protein localises to the cytoskeleton. Its subcellular location is the cell membrane. Functionally, involved in the control of cell movement by regulating actin cytoskeleton homeostasis and filopodium and lamellipodium formation. The polypeptide is MARCKS-related protein 1-B (Danio rerio (Zebrafish)).